Consider the following 448-residue polypeptide: Iroquois-class homeodomain protein irx-3 (448 aa).

Residues 108 to 170 (DPSRPKNATR…NARRRLKKEN (63 aa)) constitute a DNA-binding region (homeobox; TALE-type). Disordered regions lie at residues 171–250 (KMTW…NAPE) and 387–410 (SGTA…DRSS). A compositionally biased stretch (acidic residues) spans 195–222 (KHEDDEEIDLENIDTEDIESKEDLDDPD). Over residues 223-237 (TDIHSDSKTDARSDS) the composition is skewed to basic and acidic residues. Acidic residues predominate over residues 238–248 (EASDGFEDLNA). The segment covering 396–406 (AEPKHSTDSLT) has biased composition (basic and acidic residues).

Belongs to the TALE/IRO homeobox family. As to expression, expressed in the neural plate in overlapping patterns with other irx members, which all share an anterior border of expression. Outside the nervous system and at tailbud stages, expressed in the developing otic vesicle, branchial arches, prospective heart region and pronephros.

It is found in the nucleus. Functionally, acts partially redundantly with other irx members in neural patterning. Required for formation of the posterior forebrain, midbrain, hindbrain, and to a lesser extent, spinal cord. Both up-regulates and down-regulates gene expression during neural development. Acts early in neural plate development to induce proneural gene expression and specify a neural precursor state. Also up-regulates repressors that prevent neuronal differentiation. Required during at least two stages of pronephros kidney development; during neurula stages, maintains transcription of key renal genes to define the size and identity of the pronephric anlage, probably in part through regulation of bmp-signaling. Subsequently required for proper formation of the intermediate tubule segment of the pronephros. This chain is Iroquois-class homeodomain protein irx-3, found in Xenopus tropicalis (Western clawed frog).